Consider the following 426-residue polypeptide: MKLQKPKGTQDILPQESAKWQYVEEFARETFRKYNYAEIRTPIFEHYEVISRSVGDTTDIVTKEMYDFYDKGDRHITLRPEGTAPVVRSYVENKLFAPEVQKPVKLYYMGSMFRYERPQAGRLREFHQIGAECFGSSNPATDVEMIAMAAQFFKEIGITNVSLELNTLGNPESRAAYRQALIDYLTPLKASLSADSQRRLEENPLRVLDSKEPEDKVAVEGAPSILDYLDEESSAYFAAVRSMLETLQIPYVINTNMVRGLDYYNHTIFEFTTEVAGSQLTICAGGRYDGLVAYFGGPETPGVGFGMGLERLLLVLDKQGVELPIEMGLDAYIAVLGAGANGKALELVQSLRAQGFAAERDYLDRKIKAQFKSADIFQAKTIITLGESELESGELTVKNNVTRQEVTVAFEAIKTDFQGVLAQIGL.

The protein belongs to the class-II aminoacyl-tRNA synthetase family. In terms of assembly, homodimer.

It is found in the cytoplasm. It carries out the reaction tRNA(His) + L-histidine + ATP = L-histidyl-tRNA(His) + AMP + diphosphate + H(+). This is Histidine--tRNA ligase from Streptococcus gordonii (strain Challis / ATCC 35105 / BCRC 15272 / CH1 / DL1 / V288).